Reading from the N-terminus, the 146-residue chain is Gonadotropin subunit beta-2 (146 aa).

The first 22 residues, 1-22 (MTVEISKVFVLMMLNLFLGASS), serve as a signal peptide directing secretion. 6 cysteine pairs are disulfide-bonded: cysteine 37–cysteine 85, cysteine 51–cysteine 100, cysteine 54–cysteine 138, cysteine 62–cysteine 116, cysteine 66–cysteine 118, and cysteine 121–cysteine 128. Residue asparagine 41 is glycosylated (N-linked (GlcNAc...) asparagine).

The protein belongs to the glycoprotein hormones subunit beta family. As to quaternary structure, heterodimer of an alpha and a beta chain.

It localises to the secreted. Its function is as follows. Involved in gametogenesis and steroidogenesis. The protein is Gonadotropin subunit beta-2 (cgbb) of Trichopodus trichopterus (Three spot gourami).